Reading from the N-terminus, the 1234-residue chain is Coiled-coil domain-containing protein CG32809 (1234 aa).

Basic and acidic residues predominate over residues 1 to 11 (MLIRWKSKDKS). Disordered stretches follow at residues 1 to 88 (MLIR…HAHQ), 107 to 129 (KNKK…FDDD), and 330 to 350 (KVSM…NYEE). Residues 12–25 (ASSNQSVGGSSSSS) show a composition bias toward low complexity. A compositionally biased stretch (basic and acidic residues) spans 55 to 69 (GDERRRAMRRDDPRR). The stretch at 412–436 (HRIRVEHMERQLANLTGLVQKALVN) forms a coiled coil. A disordered region spans residues 498 to 548 (DIQGIPKSHNPLHAAETKPTKPAIKSSTLPRTSSQERDRLKPPPPPKPIVL). 2 coiled-coil regions span residues 565–594 (EVYN…SQAQ) and 630–666 (TRIS…EVIN). Disordered stretches follow at residues 754 to 793 (EQRL…ALSG), 815 to 852 (IAQQ…DESA), 928 to 1011 (LHSY…PPNQ), and 1028 to 1070 (SANA…ESGN). Composition is skewed to low complexity over residues 817–837 (QQQQ…QHQQ), 952–965 (TSSS…GSSS), 993–1004 (TSSRSPLASPTS), 1028–1039 (SANANANANSNA), and 1046–1068 (VGET…GNES). Residues 1077–1105 (VALEMRHQELLKKQKMLQEQYQRLQQMSK) adopt a coiled-coil conformation.

The chain is Coiled-coil domain-containing protein CG32809 from Drosophila melanogaster (Fruit fly).